We begin with the raw amino-acid sequence, 630 residues long: MTVARNRAGAGPGKGSPISSFADKTFTDPARIRNFCIIAHIDHGKSTLADRMLQLTGVVEERQMRAQYLDRMDIERERGITIKAQNVRLPWKVGDDEFVIHLIDTPGHVDFTYEVSRALEACEGAVLLVDAAQGIEAQTLANLYLAMEKDLTIIPVLNKIDLPAADPDRYAEEIAHITGCEPGDVLRVSGKTGMGVKELLDEVVRQVPAPVGDPDGPARAMIFDSVYDAYRGVVTYVRVVDGRISPREKITMMSTGATHDLIEVGIISPEPKASIGLGVGEVGYLITGVKDVRQSRVGDTVTAARGGATEPLVGYRDPKPMVYSGLYPLDGSDYPVLRDALDKLRLNDAALAYEPETSVALGFGFRCGFLGLLHMEITRDRLEREFGLELISTSPNVVYRVVMEDGAEHVVTNPSYWPEGKIREVYEPMVKCTVIAPSEFIGAIMELCQNRRGELGGMDYLSETRVELRYEMPMGEIMFDFFDALKSRTKGYASLDYEEAGEQQADLVKVDILLQGEAVDAFSSIVHRSAAGAYGGRMTSKLRELIPRQQFEVPIQAAIGSKIISRENIRAIRKDVLAKCYGGDISRKRKLLEKQKEGKKRMKTIGRVEVPQEAFVAALSSESVGDKPKK.

The segment at 1–22 (MTVARNRAGAGPGKGSPISSFA) is disordered. Residues 30–211 (ARIRNFCIIA…EVVRQVPAPV (182 aa)) form the tr-type G domain. GTP contacts are provided by residues 42–47 (DHGKST) and 158–161 (NKID).

It belongs to the TRAFAC class translation factor GTPase superfamily. Classic translation factor GTPase family. LepA subfamily.

The protein localises to the cell membrane. It catalyses the reaction GTP + H2O = GDP + phosphate + H(+). In terms of biological role, required for accurate and efficient protein synthesis under certain stress conditions. May act as a fidelity factor of the translation reaction, by catalyzing a one-codon backward translocation of tRNAs on improperly translocated ribosomes. Back-translocation proceeds from a post-translocation (POST) complex to a pre-translocation (PRE) complex, thus giving elongation factor G a second chance to translocate the tRNAs correctly. Binds to ribosomes in a GTP-dependent manner. The sequence is that of Elongation factor 4 from Rhodococcus opacus (strain B4).